The chain runs to 259 residues: UPF0246 protein Avin_11220 (259 aa).

It belongs to the UPF0246 family.

The polypeptide is UPF0246 protein Avin_11220 (Azotobacter vinelandii (strain DJ / ATCC BAA-1303)).